The sequence spans 135 residues: MAKQQTSPETRSVRLLKVGEQVRHILSELLARQEVHDDVLSAHTVSVTEVRMSPDLRHATVFIKALLGEDEDLVLKALRTNTAFFQREVAQRLRLKYAARLKFLADESFDVASKIETLLADPKVQRDLRDQESDG.

Belongs to the RbfA family. Monomer. Binds 30S ribosomal subunits, but not 50S ribosomal subunits or 70S ribosomes.

It localises to the cytoplasm. One of several proteins that assist in the late maturation steps of the functional core of the 30S ribosomal subunit. Associates with free 30S ribosomal subunits (but not with 30S subunits that are part of 70S ribosomes or polysomes). Required for efficient processing of 16S rRNA. May interact with the 5'-terminal helix region of 16S rRNA. This chain is Ribosome-binding factor A, found in Novosphingobium aromaticivorans (strain ATCC 700278 / DSM 12444 / CCUG 56034 / CIP 105152 / NBRC 16084 / F199).